A 152-amino-acid polypeptide reads, in one-letter code: Transcriptional repressor NrdR (152 aa).

The disordered stretch occupies residues 1–21 (MRCPFCGNGDTQVKDSRPTED). Residues 3 to 34 (CPFCGNGDTQVKDSRPTEDSAAIRRRRFCPAC) fold into a zinc finger. Positions 12–21 (QVKDSRPTED) are enriched in basic and acidic residues. Positions 49 to 139 (LVIVKKDGQR…VYRNFREAKD (91 aa)) constitute an ATP-cone domain.

The protein belongs to the NrdR family. Zn(2+) is required as a cofactor.

Negatively regulates transcription of bacterial ribonucleotide reductase nrd genes and operons by binding to NrdR-boxes. The polypeptide is Transcriptional repressor NrdR (Rhodospirillum rubrum (strain ATCC 11170 / ATH 1.1.1 / DSM 467 / LMG 4362 / NCIMB 8255 / S1)).